The following is a 364-amino-acid chain: MVVNFKVFKKCSPNNMITLYMNRRDFVDSVTQVEPIDGIIVLDDEYVRQNRKIFVQLVCNFRYGREDDEMIGLRFQKELTLVSQQVCPPQKQDIQLTKMQERLLKKLGSNAYPFVMQMPPSSPASVVLQQKASDESQPCGVQYFVKIFTGDSDCDRSHRRSTINLGIRKVQYAPTKQGIQPCTVVRKDFLLSPGELELEVTLDKQLYHHGEKISVNICVRNNSNKVVKKIKAMVQQGVDVVLFQNGQFRNTIAFMETSEGCPLNPGSSLQKVMYLVPTLVANCDRAGIAVEGDIKRKDTALASTTLIASQDARDAFGIIVSYAVKVKLFLGALGGELCAELPFILMHPKPSRKAQLEAEGSIEA.

Belongs to the arrestin family. Post-translationally, phosphorylated, but does not undergo light-induced phosphorylation. Expressed specifically and abundantly in photoreceptor cells in retina and ocelli.

The protein resides in the cell projection. It localises to the rhabdomere. In terms of biological role, regulates photoreceptor cell deactivation. Arr1 and Arr2 proteins are mediators of rhodopsin inactivation and are essential for the termination of the phototransduction cascade. Involved in regulating normal cycles of per nuclear accumulation in brain circadian neurons and thus is important for normal circadian behavior. In the dark, functions with Arr2 to promote the formation of cytosolic Bdbt foci, which are required for dco localization to photoreceptor nuclei where it phosphorylates and activates degradation of per. This Drosophila melanogaster (Fruit fly) protein is Phosrestin-2 (Arr1).